Here is a 159-residue protein sequence, read N- to C-terminus: 6,7-dimethyl-8-ribityllumazine synthase (159 aa).

5-amino-6-(D-ribitylamino)uracil is bound by residues tryptophan 27, 62 to 64 (SWE), and 86 to 88 (VLI). 91-92 (ST) lines the (2S)-2-hydroxy-3-oxobutyl phosphate pocket. Histidine 94 functions as the Proton donor in the catalytic mechanism. Leucine 119 contacts 5-amino-6-(D-ribitylamino)uracil. Residue arginine 133 coordinates (2S)-2-hydroxy-3-oxobutyl phosphate.

As to quaternary structure, homopentamer.

The enzyme catalyses (2S)-2-hydroxy-3-oxobutyl phosphate + 5-amino-6-(D-ribitylamino)uracil = 6,7-dimethyl-8-(1-D-ribityl)lumazine + phosphate + 2 H2O + H(+). The protein operates within cofactor biosynthesis; riboflavin biosynthesis; riboflavin from 2-hydroxy-3-oxobutyl phosphate and 5-amino-6-(D-ribitylamino)uracil: step 1/2. With respect to regulation, competitively inhibited by riboflavin (Ki of 17 uM). Its function is as follows. Catalyzes the formation of 6,7-dimethyl-8-ribityllumazine by condensation of 5-amino-6-(D-ribitylamino)uracil with 3,4-dihydroxy-2-butanone 4-phosphate. This is the penultimate step in the biosynthesis of riboflavin. Also binds riboflavin with an unexpected high affinity. This chain is 6,7-dimethyl-8-ribityllumazine synthase (rib4), found in Schizosaccharomyces pombe (strain 972 / ATCC 24843) (Fission yeast).